Consider the following 609-residue polypeptide: Laccase-1 (609 aa).

The N-terminal stretch at M1–A20 is a signal peptide. Positions V45–R141 constitute a Plastocyanin-like 1 domain. N75 carries an N-linked (GlcNAc...) asparagine glycan. Residues H79, H81, H123, and H125 each contribute to the Cu cation site. N257 is a glycosylation site (N-linked (GlcNAc...) asparagine). In terms of domain architecture, Plastocyanin-like 2 spans T270–V372. N-linked (GlcNAc...) asparagine glycans are attached at residues N403, N443, and N486. One can recognise a Plastocyanin-like 3 domain in the interval S463 to D602. Residues H508, H511, and H513 each coordinate Cu cation. N531 and N546 each carry an N-linked (GlcNAc...) asparagine glycan. Cu cation-binding residues include H585, C586, H587, and H591.

It belongs to the multicopper oxidase family. Cu cation is required as a cofactor.

The protein localises to the secreted. It carries out the reaction 4 hydroquinone + O2 = 4 benzosemiquinone + 2 H2O. In terms of biological role, required for the conversion of the yellow polyketide pigment synthesized by wA to the conidial green pigment. The protein is Laccase-1 (yA) of Emericella nidulans (strain FGSC A4 / ATCC 38163 / CBS 112.46 / NRRL 194 / M139) (Aspergillus nidulans).